The following is a 356-amino-acid chain: Peptide chain release factor 1 (356 aa).

Q233 carries the N5-methylglutamine modification.

The protein belongs to the prokaryotic/mitochondrial release factor family. Methylated by PrmC. Methylation increases the termination efficiency of RF1.

The protein resides in the cytoplasm. Its function is as follows. Peptide chain release factor 1 directs the termination of translation in response to the peptide chain termination codons UAG and UAA. This Syntrophotalea carbinolica (strain DSM 2380 / NBRC 103641 / GraBd1) (Pelobacter carbinolicus) protein is Peptide chain release factor 1.